The sequence spans 645 residues: Translation factor GUF1, mitochondrial (645 aa).

One can recognise a tr-type G domain in the interval 44–228 (ENYRNFSIVA…AIIDRIPPPT (185 aa)). GTP-binding positions include 53 to 60 (AHVDHGKS), 120 to 124 (DTPGH), and 174 to 177 (NKID).

It belongs to the TRAFAC class translation factor GTPase superfamily. Classic translation factor GTPase family. LepA subfamily.

The protein localises to the mitochondrion inner membrane. It catalyses the reaction GTP + H2O = GDP + phosphate + H(+). Functionally, promotes mitochondrial protein synthesis. May act as a fidelity factor of the translation reaction, by catalyzing a one-codon backward translocation of tRNAs on improperly translocated ribosomes. Binds to mitochondrial ribosomes in a GTP-dependent manner. This Saccharomyces cerevisiae (strain RM11-1a) (Baker's yeast) protein is Translation factor GUF1, mitochondrial.